The sequence spans 239 residues: Ribosomal RNA small subunit methyltransferase G (239 aa).

S-adenosyl-L-methionine is bound by residues Gly76, Phe81, 99-101, 128-129, and Arg147; these read DSS and IE.

It belongs to the methyltransferase superfamily. RNA methyltransferase RsmG family.

The protein resides in the cytoplasm. In terms of biological role, specifically methylates the N7 position of a guanine in 16S rRNA. The protein is Ribosomal RNA small subunit methyltransferase G of Prochlorococcus marinus (strain MIT 9515).